We begin with the raw amino-acid sequence, 861 residues long: Bifunctional uridylyltransferase/uridylyl-removing enzyme (861 aa).

A uridylyltransferase region spans residues 1–321; it reads MKNDNRIIKN…VYHQKQKIIR (321 aa). The tract at residues 322–678 is uridylyl-removing; sequence LDDEFQLSNR…IMPHHSQGGT (357 aa). Positions 440 to 562 constitute an HD domain; it reads VDQHTLFVIR…LPHARYLDYL (123 aa). 2 ACT domains span residues 679 to 760 and 788 to 861; these read EVFI…AVSR and QLFL…KSKY.

It belongs to the GlnD family. The cofactor is Mg(2+).

It catalyses the reaction [protein-PII]-L-tyrosine + UTP = [protein-PII]-uridylyl-L-tyrosine + diphosphate. The catalysed reaction is [protein-PII]-uridylyl-L-tyrosine + H2O = [protein-PII]-L-tyrosine + UMP + H(+). Its activity is regulated as follows. Uridylyltransferase (UTase) activity is inhibited by glutamine, while glutamine activates uridylyl-removing (UR) activity. In terms of biological role, modifies, by uridylylation and deuridylylation, the PII regulatory proteins (GlnB and homologs), in response to the nitrogen status of the cell that GlnD senses through the glutamine level. Under low glutamine levels, catalyzes the conversion of the PII proteins and UTP to PII-UMP and PPi, while under higher glutamine levels, GlnD hydrolyzes PII-UMP to PII and UMP (deuridylylation). Thus, controls uridylylation state and activity of the PII proteins, and plays an important role in the regulation of nitrogen assimilation and metabolism. This is Bifunctional uridylyltransferase/uridylyl-removing enzyme from Legionella pneumophila (strain Paris).